Here is a 347-residue protein sequence, read N- to C-terminus: Chlorophyllase type 0 (347 aa).

Positions 1–19 (MAKLLLLIFGVFIFVNSQA) are cleaved as a signal peptide. The propeptide occupies 20-30 (QTFPTILEKHN). The GXSXG signature appears at 160 to 164 (GHSRG). Ser162 (nucleophile) is an active-site residue. Asp191 acts as the Charge relay system in catalysis. 3 N-linked (GlcNAc...) asparagine glycosylation sites follow: Asn215, Asn229, and Asn251. His262 functions as the Charge relay system in the catalytic mechanism. Residue Asn321 is glycosylated (N-linked (GlcNAc...) asparagine).

Belongs to the AB hydrolase superfamily. Lipase family.

It carries out the reaction a chlorophyll + H2O = a chlorophyllide + phytol + H(+). The catalysed reaction is chlorophyll a + H2O = phytol + chlorophyllide a + H(+). It participates in porphyrin-containing compound metabolism; chlorophyll degradation. Its activity is regulated as follows. Inhibited by diisopropyl fluorophosphate (DFP), phenylmethanesulfonyl fluoride (PMSF) or p-chloromercuribenzoic acid (PCMB), but not by N-ethylmaleimide (NEM) or iodoacetamide. Catalyzes the hydrolysis of ester bond in chlorophyll to yield chlorophyllide and phytol. This is Chlorophyllase type 0 from Chenopodium album (Fat hen).